The following is a 220-amino-acid chain: Pyridoxine/pyridoxamine 5'-phosphate oxidase (220 aa).

Substrate is bound by residues 13-16 (RVEY) and Lys77. FMN contacts are provided by residues 72–77 (RTVLCK), 87–88 (FT), Lys94, and Gln116. Residues Tyr134, Arg138, and Ser142 each contribute to the substrate site. FMN-binding positions include 151–152 (QS) and Trp197. 203–205 (RVH) contributes to the substrate binding site. Residue Arg207 participates in FMN binding.

This sequence belongs to the pyridoxamine 5'-phosphate oxidase family. As to quaternary structure, homodimer. FMN is required as a cofactor.

The catalysed reaction is pyridoxamine 5'-phosphate + O2 + H2O = pyridoxal 5'-phosphate + H2O2 + NH4(+). The enzyme catalyses pyridoxine 5'-phosphate + O2 = pyridoxal 5'-phosphate + H2O2. It functions in the pathway cofactor metabolism; pyridoxal 5'-phosphate salvage; pyridoxal 5'-phosphate from pyridoxamine 5'-phosphate: step 1/1. The protein operates within cofactor metabolism; pyridoxal 5'-phosphate salvage; pyridoxal 5'-phosphate from pyridoxine 5'-phosphate: step 1/1. Catalyzes the oxidation of either pyridoxine 5'-phosphate (PNP) or pyridoxamine 5'-phosphate (PMP) into pyridoxal 5'-phosphate (PLP). In Mycobacterium sp. (strain KMS), this protein is Pyridoxine/pyridoxamine 5'-phosphate oxidase.